A 230-amino-acid chain; its full sequence is Osmotin-like protein PR-5x (230 aa).

A signal peptide spans 1-25 (MYTNMGYLTSSFIFFFLALVTYTYA). 8 disulfide bridges follow: Cys34–Cys229, Cys76–Cys86, Cys91–Cys97, Cys145–Cys217, Cys150–Cys200, Cys158–Cys168, Cys172–Cys181, and Cys182–Cys187.

This sequence belongs to the thaumatin family.

It is found in the secreted. The protein resides in the vacuole. The enzyme catalyses Endohydrolysis of (1-&gt;3)- or (1-&gt;4)-linkages in beta-D-glucans when the glucose residue whose reducing group is involved in the linkage to be hydrolyzed is itself substituted at C-3.. Antifungal protein. May bind to beta-glucans and have beta-1,3-D-glucanase activity. The sequence is that of Osmotin-like protein PR-5x from Solanum lycopersicum (Tomato).